A 569-amino-acid polypeptide reads, in one-letter code: Matrix metalloproteinase-21 (569 aa).

A signal peptide spans 1–24 (MLAASIFRPTLLLCWLAAPWPTQP). The propeptide occupies 25–144 (ESLFHSRDRS…GPPPRARSRR (120 aa)). Residues 115 to 122 (PRCGVPDM) carry the Cysteine switch motif. A disordered region spans residues 115–166 (PRCGVPDMRPPPPSAPPSPPGPPPRARSRRSPRAPLSLSRRGWQPRGYPDGG). Position 117 (cysteine 117) interacts with Zn(2+). Positions 122-139 (MRPPPPSAPPSPPGPPPR) are enriched in pro residues. Residues 147–156 (RAPLSLSRRG) show a composition bias toward low complexity. Histidine 283 contacts Zn(2+). Glutamate 284 is a catalytic residue. Positions 287 and 293 each coordinate Zn(2+). A disulfide bond links cysteine 329 and cysteine 560. Hemopexin repeat units follow at residues 330–389 (EGSF…WPGI), 391–447 (THNI…FPGI), 448–496 (PSPL…FPAV), and 503–559 (FRNI…WFDV). Asparagine 372 carries N-linked (GlcNAc...) asparagine glycosylation.

The protein belongs to the peptidase M10A family. Zn(2+) serves as cofactor. It depends on Ca(2+) as a cofactor. The precursor is cleaved by a furin endopeptidase. In terms of tissue distribution, identified in fetal brain, kidney and liver. In adult tissues found primarily in ovary, kidney, liver, lung, placenta, brain and peripheral blood leukocytes. Expressed as well in various cancer cell lines.

It localises to the secreted. In terms of biological role, plays a specialized role in the generation of left-right asymmetry during embryogenesis. May act as a negative regulator of the NOTCH-signaling pathway. Cleaves alpha-1-antitrypsin. This Homo sapiens (Human) protein is Matrix metalloproteinase-21 (MMP21).